A 264-amino-acid polypeptide reads, in one-letter code: Low molecular mass lipoprotein PBMHPC-23 (264 aa).

Positions 1–23 (MKFLVVFAVVRACVTPACAEMSA) are cleaved as a signal peptide.

It belongs to the 30 kDa lipoprotein family.

It localises to the secreted. The chain is Low molecular mass lipoprotein PBMHPC-23 from Bombyx mori (Silk moth).